The following is a 115-amino-acid chain: U3-lycotoxin-Ls1a (115 aa).

The N-terminal stretch at 1-20 is a signal peptide; that stretch reads MKFVLLFGVLLVTLFSYSSA. A propeptide spanning residues 21–44 is cleaved from the precursor; that stretch reads EMLDDFDQADEEELLSLIEKEEAR. Cystine bridges form between Cys-48/Cys-63, Cys-55/Cys-72, Cys-62/Cys-87, and Cys-74/Cys-85.

This sequence belongs to the neurotoxin 19 (CSTX) family. 01 subfamily. In terms of tissue distribution, expressed by the venom gland.

It is found in the secreted. The protein is U3-lycotoxin-Ls1a of Lycosa singoriensis (Wolf spider).